The sequence spans 197 residues: Protein SYM1 (197 aa).

4 helical membrane passes run 20-40 (AIMTGALFGIGDVSAQLLFPT), 55-75 (AVIYGSLIFSFIGDKWYKILN), 97-117 (VDQLAFAPLGLPFYFTCMSIM), and 137-157 (LLTNWAVWPLFQAINFSVVPL).

It belongs to the peroxisomal membrane protein PXMP2/4 family.

The protein localises to the mitochondrion inner membrane. In terms of biological role, may be involved in cellular response to stress. Required to maintain mitochondrial DNA (mtDNA) integrity and stability. Required for ethanol metabolism and tolerance during heat shock. This is Protein SYM1 (SYM1) from Saccharomyces cerevisiae (strain ATCC 204508 / S288c) (Baker's yeast).